The following is a 372-amino-acid chain: tRNA pseudouridine synthase D (372 aa).

The Nucleophile role is filled by Asp85. In terms of domain architecture, TRUD spans 160 to 330 (GFANYFGYQR…MQGSRRFMWG (171 aa)).

Belongs to the pseudouridine synthase TruD family.

It carries out the reaction uridine(13) in tRNA = pseudouridine(13) in tRNA. Its function is as follows. Responsible for synthesis of pseudouridine from uracil-13 in transfer RNAs. The protein is tRNA pseudouridine synthase D of Campylobacter jejuni subsp. jejuni serotype O:6 (strain 81116 / NCTC 11828).